The chain runs to 241 residues: Ribose-5-phosphate isomerase A (241 aa).

Residues 29 to 32, 84 to 87, and 97 to 100 contribute to the substrate site; these read TGTT, DGAD, and KGGG. E106 acts as the Proton acceptor in catalysis. K124 contacts substrate.

Belongs to the ribose 5-phosphate isomerase family. As to quaternary structure, homodimer.

The enzyme catalyses aldehydo-D-ribose 5-phosphate = D-ribulose 5-phosphate. The protein operates within carbohydrate degradation; pentose phosphate pathway; D-ribose 5-phosphate from D-ribulose 5-phosphate (non-oxidative stage): step 1/1. Its function is as follows. Catalyzes the reversible conversion of ribose-5-phosphate to ribulose 5-phosphate. This chain is Ribose-5-phosphate isomerase A, found in Thermoplasma acidophilum (strain ATCC 25905 / DSM 1728 / JCM 9062 / NBRC 15155 / AMRC-C165).